The sequence spans 273 residues: Shikimate dehydrogenase (NADP(+)) (273 aa).

Shikimate contacts are provided by residues 14–16 (SLS) and T59. The Proton acceptor role is filled by K63. Residues N84 and D99 each coordinate shikimate. NADP(+)-binding positions include 122–126 (GAGGA) and M212. Residue Y214 participates in shikimate binding. An NADP(+)-binding site is contributed by G235.

The protein belongs to the shikimate dehydrogenase family. In terms of assembly, homodimer.

It catalyses the reaction shikimate + NADP(+) = 3-dehydroshikimate + NADPH + H(+). Its pathway is metabolic intermediate biosynthesis; chorismate biosynthesis; chorismate from D-erythrose 4-phosphate and phosphoenolpyruvate: step 4/7. Functionally, involved in the biosynthesis of the chorismate, which leads to the biosynthesis of aromatic amino acids. Catalyzes the reversible NADPH linked reduction of 3-dehydroshikimate (DHSA) to yield shikimate (SA). The polypeptide is Shikimate dehydrogenase (NADP(+)) (Aeropyrum pernix (strain ATCC 700893 / DSM 11879 / JCM 9820 / NBRC 100138 / K1)).